The sequence spans 328 residues: Tetraacyldisaccharide 4'-kinase (328 aa).

55–62 (TVGGNGKT) lines the ATP pocket.

Belongs to the LpxK family.

The catalysed reaction is a lipid A disaccharide + ATP = a lipid IVA + ADP + H(+). Its pathway is glycolipid biosynthesis; lipid IV(A) biosynthesis; lipid IV(A) from (3R)-3-hydroxytetradecanoyl-[acyl-carrier-protein] and UDP-N-acetyl-alpha-D-glucosamine: step 6/6. Functionally, transfers the gamma-phosphate of ATP to the 4'-position of a tetraacyldisaccharide 1-phosphate intermediate (termed DS-1-P) to form tetraacyldisaccharide 1,4'-bis-phosphate (lipid IVA). The polypeptide is Tetraacyldisaccharide 4'-kinase (Hamiltonella defensa subsp. Acyrthosiphon pisum (strain 5AT)).